The primary structure comprises 517 residues: T-box transcription factor TBX22 (517 aa).

The interval 1-83 (MALSSRAHAF…SDESNSQESL (83 aa)) is disordered. Residues 35-45 (LQEEQFVEEGE) show a composition bias toward acidic residues. Positions 46–66 (EILRSPSRDSQQPEKRLKAES) are enriched in basic and acidic residues. The segment covering 74-83 (SDESNSQESL) has biased composition (low complexity). The T-box DNA-binding region spans 93–280 (LQGSDLWKRF…RNPFAKGFRD (188 aa)). The interval 312–333 (TQSGSSGSSPVTSSGGAPSPLN) is disordered. A compositionally biased stretch (low complexity) spans 314 to 333 (SGSSGSSPVTSSGGAPSPLN).

Its subcellular location is the nucleus. Probable transcriptional regulator involved in developmental processes. This is major determinant crucial to palatogenesis. This Mus musculus (Mouse) protein is T-box transcription factor TBX22 (Tbx22).